Consider the following 305-residue polypeptide: Fructose-bisphosphate aldolase (305 aa).

D-glyceraldehyde 3-phosphate is bound at residue S49. Residue D80 is the Proton donor of the active site. Zn(2+) is bound by residues H81, D102, E132, and H178. Residue G179 coordinates dihydroxyacetone phosphate. H208 provides a ligand contact to Zn(2+). Residues 209-211 (GAS) and 251-254 (NTDT) contribute to the dihydroxyacetone phosphate site.

This sequence belongs to the class II fructose-bisphosphate aldolase family. As to quaternary structure, homotetramer. Requires Zn(2+) as cofactor.

It catalyses the reaction beta-D-fructose 1,6-bisphosphate = D-glyceraldehyde 3-phosphate + dihydroxyacetone phosphate. Its pathway is carbohydrate degradation; glycolysis; D-glyceraldehyde 3-phosphate and glycerone phosphate from D-glucose: step 4/4. Functionally, catalyzes the aldol condensation of dihydroxyacetone phosphate (DHAP or glycerone-phosphate) with glyceraldehyde 3-phosphate (G3P) to form fructose 1,6-bisphosphate (FBP) in gluconeogenesis and the reverse reaction in glycolysis. The sequence is that of Fructose-bisphosphate aldolase from Thermus caldophilus.